A 70-amino-acid chain; its full sequence is uncharacterized protein (70 aa).

The chain crosses the membrane as a helical span at residues 15–37 (LLVSSISESAVALIIITIRILFS).

It is found in the membrane. This is an uncharacterized protein from Saccharomyces cerevisiae (strain ATCC 204508 / S288c) (Baker's yeast).